Consider the following 92-residue polypeptide: Small nuclear ribonucleoprotein E (92 aa).

The 75-residue stretch at 18-92 folds into the Sm domain; the sequence is INLIFRYLQN…NITLLQSVSN (75 aa).

The protein belongs to the snRNP Sm proteins family. Core component of the spliceosomal U1, U2, U4 and U5 small nuclear ribonucleoproteins (snRNPs), the building blocks of the spliceosome. Most spliceosomal snRNPs contain a common set of Sm proteins, SNRPB, SNRPD1, SNRPD2, SNRPD3, SNRPE, SNRPF and SNRPG that assemble in a heptameric protein ring on the Sm site of the small nuclear RNA to form the core snRNP. Component of the U1 snRNP. The U1 snRNP is composed of the U1 snRNA and the 7 core Sm proteins SNRPB, SNRPD1, SNRPD2, SNRPD3, SNRPE, SNRPF and SNRPG, and at least three U1 snRNP-specific proteins SNRNP70/U1-70K, SNRPA/U1-A and SNRPC/U1-C. Component of the U4/U6-U5 tri-snRNP complex composed of the U4, U6 and U5 snRNAs and at least PRPF3, PRPF4, PRPF6, PRPF8, PRPF31, SNRNP200, TXNL4A, SNRNP40, SNRPB, SNRPD1, SNRPD2, SNRPD3, SNRPE, SNRPF, SNRPG, DDX23, CD2BP2, PPIH, SNU13, EFTUD2, SART1 and USP39, plus LSM2, LSM3, LSM4, LSM5, LSM6, LSM7 and LSM8. Component of the U7 snRNP complex, or U7 Sm protein core complex, that is composed of the U7 snRNA and at least LSM10, LSM11, SNRPB, SNRPD3, SNRPE, SNRPF and SNRPG; the complex does not contain SNRPD1 and SNRPD2. Component of the minor spliceosome, which splices U12-type introns. Part of the SMN-Sm complex that contains SMN1, GEMIN2/SIP1, DDX20/GEMIN3, GEMIN4, GEMIN5, GEMIN6, GEMIN7, GEMIN8, STRAP/UNRIP and the Sm proteins SNRPB, SNRPD1, SNRPD2, SNRPD3, SNRPE, SNRPF and SNRPG; catalyzes core snRNPs assembly. Forms a 6S pICln-Sm complex composed of CLNS1A/pICln, SNRPD1, SNRPD2, SNRPE, SNRPF and SNRPG; ring-like structure where CLNS1A/pICln mimics additional Sm proteins and which is unable to assemble into the core snRNP. Interacts with SMN1; the interaction is direct. Interacts with GEMIN2 (via N-terminus); the interaction is direct. Interacts with SNRPF; the interaction is direct. Interacts with SNRPG; the interaction is direct.

It is found in the cytoplasm. The protein resides in the cytosol. The protein localises to the nucleus. Plays a role in pre-mRNA splicing as a core component of the spliceosomal U1, U2, U4 and U5 small nuclear ribonucleoproteins (snRNPs), the building blocks of the spliceosome. Component of both the pre-catalytic spliceosome B complex and activated spliceosome C complexes. As a component of the minor spliceosome, involved in the splicing of U12-type introns in pre-mRNAs. As part of the U7 snRNP it is involved in histone 3'-end processing. The protein is Small nuclear ribonucleoprotein E (SNRPE) of Sus scrofa (Pig).